The primary structure comprises 151 residues: Cysteine proteinase inhibitor 10 (151 aa).

Residues 1 to 22 (MATSPMLFLVSLLLVLVAAATG) form the signal peptide. The 70-residue stretch at 40 to 109 (GGRTEIRDVG…GVAYYLKVAA (70 aa)) folds into the Cystatin domain. A Secondary area of contact motif is present at residues 96 to 100 (QVVSG).

This sequence belongs to the cystatin family. Phytocystatin subfamily.

The protein resides in the secreted. In terms of biological role, specific inhibitor of cysteine proteinases. Probably involved in the regulation of endogenous processes and in defense against pests and pathogens. This is Cysteine proteinase inhibitor 10 from Oryza sativa subsp. indica (Rice).